The chain runs to 448 residues: Histidine--tRNA ligase (448 aa).

2 disordered regions span residues 1–20 and 428–448; these read MAIK…SPKL and AGQA…QEKA.

The protein belongs to the class-II aminoacyl-tRNA synthetase family. In terms of assembly, homodimer.

It is found in the cytoplasm. The catalysed reaction is tRNA(His) + L-histidine + ATP = L-histidyl-tRNA(His) + AMP + diphosphate + H(+). This is Histidine--tRNA ligase from Deinococcus deserti (strain DSM 17065 / CIP 109153 / LMG 22923 / VCD115).